A 163-amino-acid chain; its full sequence is Transcription antitermination protein NusB (163 aa).

The protein belongs to the NusB family.

Functionally, involved in transcription antitermination. Required for transcription of ribosomal RNA (rRNA) genes. Binds specifically to the boxA antiterminator sequence of the ribosomal RNA (rrn) operons. This Chlorobium luteolum (strain DSM 273 / BCRC 81028 / 2530) (Pelodictyon luteolum) protein is Transcription antitermination protein NusB.